The following is a 430-amino-acid chain: Ribulose bisphosphate carboxylase (430 aa).

The Proton acceptor role is filled by Lys-160. A substrate-binding site is contributed by Lys-162. Lys-186, Asp-188, and Glu-189 together coordinate Mg(2+). Lys-186 carries the post-translational modification N6-carboxylysine. The active-site Proton acceptor is His-278. Residues Arg-279, His-311, 348–350 (SGG), and 370–373 (QAGG) each bind substrate.

The protein belongs to the RuBisCO large chain family. Type III subfamily. In terms of assembly, homodimer or homodecamer. In contrast to form I RuBisCO, the form III RuBisCO is composed solely of large subunits. Requires Mg(2+) as cofactor.

The enzyme catalyses 2 (2R)-3-phosphoglycerate + 2 H(+) = D-ribulose 1,5-bisphosphate + CO2 + H2O. The catalysed reaction is D-ribulose 1,5-bisphosphate + O2 = 2-phosphoglycolate + (2R)-3-phosphoglycerate + 2 H(+). Its function is as follows. Catalyzes the addition of molecular CO(2) and H(2)O to ribulose 1,5-bisphosphate (RuBP), generating two molecules of 3-phosphoglycerate (3-PGA). Functions in an archaeal AMP degradation pathway, together with AMP phosphorylase and R15P isomerase. This is Ribulose bisphosphate carboxylase from Pyrococcus horikoshii (strain ATCC 700860 / DSM 12428 / JCM 9974 / NBRC 100139 / OT-3).